The sequence spans 325 residues: tRNA N6-adenosine threonylcarbamoyltransferase (325 aa).

Fe cation is bound by residues His-110 and His-114. Residues 133–137 (MVSGG), Asp-165, Gly-178, and Asn-268 contribute to the substrate site. Asp-296 contacts Fe cation.

This sequence belongs to the KAE1 / TsaD family. It depends on Fe(2+) as a cofactor.

The protein localises to the cytoplasm. It catalyses the reaction L-threonylcarbamoyladenylate + adenosine(37) in tRNA = N(6)-L-threonylcarbamoyladenosine(37) in tRNA + AMP + H(+). Required for the formation of a threonylcarbamoyl group on adenosine at position 37 (t(6)A37) in tRNAs that read codons beginning with adenine. Is involved in the transfer of the threonylcarbamoyl moiety of threonylcarbamoyl-AMP (TC-AMP) to the N6 group of A37, together with TsaE and TsaB. TsaD likely plays a direct catalytic role in this reaction. The chain is tRNA N6-adenosine threonylcarbamoyltransferase from Thermosipho melanesiensis (strain DSM 12029 / CIP 104789 / BI429).